We begin with the raw amino-acid sequence, 192 residues long: Der GTPase-activating protein YihI (192 aa).

Residues 1 to 12 show a composition bias toward basic residues; sequence MSAKQPNRKPAG. Disordered stretches follow at residues 1-87 and 145-192; these read MSAK…IKEK and DTDD…PKKK. The span at 13-26 shows a compositional bias: basic and acidic residues; it reads KRKESDASAQEGRE. A compositionally biased stretch (basic residues) spans 27-36; that stretch reads RKRAAKRKGL. Acidic residues predominate over residues 145–172; the sequence is DTDDDEDEADFDEADFDEPGQPASEEEL. Over residues 183–192 the composition is skewed to basic and acidic residues; the sequence is PEPKPEPKKK.

This sequence belongs to the YihI family. As to quaternary structure, interacts with Der.

In terms of biological role, a GTPase-activating protein (GAP) that modifies Der/EngA GTPase function. May play a role in ribosome biogenesis. This Aeromonas hydrophila subsp. hydrophila (strain ATCC 7966 / DSM 30187 / BCRC 13018 / CCUG 14551 / JCM 1027 / KCTC 2358 / NCIMB 9240 / NCTC 8049) protein is Der GTPase-activating protein YihI.